The following is a 118-amino-acid chain: uncharacterized protein (118 aa).

A run of 3 helical transmembrane segments spans residues 17 to 37 (IIII…FAIL), 60 to 80 (INYT…IMIF), and 90 to 110 (YIEQ…GSFW).

It localises to the membrane. This is an uncharacterized protein from Acanthamoeba polyphaga mimivirus (APMV).